The chain runs to 584 residues: DNA mismatch repair protein MutL (584 aa).

The protein belongs to the DNA mismatch repair MutL/HexB family.

This protein is involved in the repair of mismatches in DNA. It is required for dam-dependent methyl-directed DNA mismatch repair. May act as a 'molecular matchmaker', a protein that promotes the formation of a stable complex between two or more DNA-binding proteins in an ATP-dependent manner without itself being part of a final effector complex. This Buchnera aphidicola subsp. Acyrthosiphon pisum (strain 5A) protein is DNA mismatch repair protein MutL.